We begin with the raw amino-acid sequence, 315 residues long: Transmembrane protein 231 (315 aa).

A helical transmembrane segment spans residues 23 to 43 (AALFLLLTTALTYIPPLLVAF). Asparagine 194, asparagine 199, and asparagine 221 each carry an N-linked (GlcNAc...) asparagine glycan. Residues 262 to 282 (FWEMIKFAWIQYVSILLIFLW) form a helical membrane-spanning segment.

This sequence belongs to the TMEM231 family. In terms of assembly, part of the tectonic-like complex (also named B9 complex). Interacts with TMEM107.

Its subcellular location is the cell projection. It localises to the cilium membrane. Functionally, transmembrane component of the tectonic-like complex, a complex localized at the transition zone of primary cilia and acting as a barrier that prevents diffusion of transmembrane proteins between the cilia and plasma membranes. Required for ciliogenesis and sonic hedgehog/SHH signaling. The polypeptide is Transmembrane protein 231 (Tmem231) (Mus musculus (Mouse)).